Consider the following 217-residue polypeptide: tRNA (guanine-N(7)-)-methyltransferase (217 aa).

Residues Glu-43, Asp-68, Asn-101, and Asn-123 each contribute to the S-adenosyl-L-methionine site. Residue Lys-127 coordinates substrate. The tract at residues 129–134 (RHNKRR) is interaction with RNA. Substrate-binding positions include Asp-159 and 196 to 199 (TEYE).

This sequence belongs to the class I-like SAM-binding methyltransferase superfamily. TrmB family.

The catalysed reaction is guanosine(46) in tRNA + S-adenosyl-L-methionine = N(7)-methylguanosine(46) in tRNA + S-adenosyl-L-homocysteine. The protein operates within tRNA modification; N(7)-methylguanine-tRNA biosynthesis. In terms of biological role, catalyzes the formation of N(7)-methylguanine at position 46 (m7G46) in tRNA. In Clostridium botulinum (strain 657 / Type Ba4), this protein is tRNA (guanine-N(7)-)-methyltransferase.